A 442-amino-acid polypeptide reads, in one-letter code: Histidine--tRNA ligase (442 aa).

It belongs to the class-II aminoacyl-tRNA synthetase family. As to quaternary structure, homodimer.

It is found in the cytoplasm. It catalyses the reaction tRNA(His) + L-histidine + ATP = L-histidyl-tRNA(His) + AMP + diphosphate + H(+). The protein is Histidine--tRNA ligase of Helicobacter acinonychis (strain Sheeba).